A 265-amino-acid polypeptide reads, in one-letter code: MTTPTPLAPDGDDPLVIAGTPLRSRLLIGTAGYPTQAIMAEAVRASGAEIATVSIRRVSLRGHGSDTVSLLAGHRFLPNTAGCETARDAVMTAELAREALGTAWIKVEVIGDRETLYPDVAETLEATRQLVDAGFVVLPYCNDDPVVCARLADLGAAAVMPMGSLIGSGMGVANPANLELICRRSPVPVIVDAGIGTASDAVIAMELGAAAVLLNTAVAKADDPVRMARAMRHAVEAGRLAHGAGRIPRRARAEPSSPQLGLVGS.

The active-site Schiff-base intermediate with DXP is K106. 1-deoxy-D-xylulose 5-phosphate contacts are provided by residues G167, 193–194 (AG), and 215–216 (NT). A disordered region spans residues 245–265 (GRIPRRARAEPSSPQLGLVGS).

It belongs to the ThiG family. In terms of assembly, homotetramer. Forms heterodimers with either ThiH or ThiS.

It is found in the cytoplasm. It catalyses the reaction [ThiS sulfur-carrier protein]-C-terminal-Gly-aminoethanethioate + 2-iminoacetate + 1-deoxy-D-xylulose 5-phosphate = [ThiS sulfur-carrier protein]-C-terminal Gly-Gly + 2-[(2R,5Z)-2-carboxy-4-methylthiazol-5(2H)-ylidene]ethyl phosphate + 2 H2O + H(+). It participates in cofactor biosynthesis; thiamine diphosphate biosynthesis. In terms of biological role, catalyzes the rearrangement of 1-deoxy-D-xylulose 5-phosphate (DXP) to produce the thiazole phosphate moiety of thiamine. Sulfur is provided by the thiocarboxylate moiety of the carrier protein ThiS. In vitro, sulfur can be provided by H(2)S. The chain is Thiazole synthase from Methylobacterium sp. (strain 4-46).